We begin with the raw amino-acid sequence, 571 residues long: Hemagglutinin-neuraminidase (571 aa).

At Met-1 to Arg-26 the chain is on the intravirion side. Residues Ile-27–Ser-47 traverse the membrane as a helical segment. The Virion surface portion of the chain corresponds to Met-48–Val-571. A glycan (N-linked (GlcNAc...) asparagine; by host) is linked at Asn-119. Residues Gly-124 to Tyr-152 are important for interaction with fusion/F protein. Disulfide bonds link Cys-172–Cys-196, Cys-186–Cys-247, and Cys-238–Cys-251. The segment at Asn-234 to Ser-239 is involved in neuraminidase activity. N-linked (GlcNAc...) asparagine; by host glycosylation is found at Asn-341 and Asn-433. 2 disulfides stabilise this stretch: Cys-344–Cys-461 and Cys-455–Cys-465. N-linked (GlcNAc...) asparagine; by host glycosylation is found at Asn-481, Asn-508, and Asn-538. Residues Cys-531 and Cys-542 are joined by a disulfide bond.

The protein belongs to the paramyxoviruses hemagglutinin-neuraminidase family. In terms of assembly, homotetramer; composed of disulfide-linked homodimers. Interacts with F protein trimer. Interacts with host CG-1B; this interaction inhibits viral adsorption and replication rather than internalization.

It localises to the virion membrane. Its subcellular location is the host cell membrane. The catalysed reaction is Hydrolysis of alpha-(2-&gt;3)-, alpha-(2-&gt;6)-, alpha-(2-&gt;8)- glycosidic linkages of terminal sialic acid residues in oligosaccharides, glycoproteins, glycolipids, colominic acid and synthetic substrates.. Functionally, mediates the viral entry into the host cell together with fusion/F protein. Attaches the virus to sialic acid-containing cell receptors and thereby initiates infection. Binding of HN protein to the receptor induces a conformational change that allows the F protein to trigger virion/cell membranes fusion. Neuraminidase activity ensures the efficient spread of the virus by dissociating the mature virions from the neuraminic acid containing glycoproteins. The protein is Hemagglutinin-neuraminidase (HN) of Gallus gallus (Chicken).